Consider the following 174-residue polypeptide: Transcriptional repressor NrdR (174 aa).

Residues 3–34 (CPFCQHNDTRVIDSRVSEDGTTIRRRRECEAC) fold into a zinc finger. In terms of domain architecture, ATP-cone spans 49-139 (PTVVKSDGGR…VYRSFQDVAD (91 aa)).

The protein belongs to the NrdR family. The cofactor is Zn(2+).

In terms of biological role, negatively regulates transcription of bacterial ribonucleotide reductase nrd genes and operons by binding to NrdR-boxes. In Xanthomonas campestris pv. campestris (strain 8004), this protein is Transcriptional repressor NrdR.